Consider the following 282-residue polypeptide: Phosphatidylglycerol--prolipoprotein diacylglyceryl transferase (282 aa).

The next 3 helical transmembrane spans lie at 18 to 38 (LSIK…YFIA), 55 to 75 (VIFY…VIFQ), and 89 to 109 (IWHG…TGII). Arg-137 is an a 1,2-diacyl-sn-glycero-3-phospho-(1'-sn-glycerol) binding site. 2 consecutive transmembrane segments (helical) span residues 203–223 (VGET…FVEG) and 235–255 (IRVA…ILIY).

It belongs to the Lgt family.

It localises to the cell membrane. The catalysed reaction is L-cysteinyl-[prolipoprotein] + a 1,2-diacyl-sn-glycero-3-phospho-(1'-sn-glycerol) = an S-1,2-diacyl-sn-glyceryl-L-cysteinyl-[prolipoprotein] + sn-glycerol 1-phosphate + H(+). It functions in the pathway protein modification; lipoprotein biosynthesis (diacylglyceryl transfer). Catalyzes the transfer of the diacylglyceryl group from phosphatidylglycerol to the sulfhydryl group of the N-terminal cysteine of a prolipoprotein, the first step in the formation of mature lipoproteins. This is Phosphatidylglycerol--prolipoprotein diacylglyceryl transferase from Staphylococcus haemolyticus (strain JCSC1435).